A 711-amino-acid chain; its full sequence is Ribosomal RNA large subunit methyltransferase K/L (711 aa).

Positions 43–154 (TLYRTLLWSR…RENLVISLDL (112 aa)) constitute a THUMP domain.

This sequence belongs to the methyltransferase superfamily. RlmKL family.

It is found in the cytoplasm. It carries out the reaction guanosine(2445) in 23S rRNA + S-adenosyl-L-methionine = N(2)-methylguanosine(2445) in 23S rRNA + S-adenosyl-L-homocysteine + H(+). The catalysed reaction is guanosine(2069) in 23S rRNA + S-adenosyl-L-methionine = N(2)-methylguanosine(2069) in 23S rRNA + S-adenosyl-L-homocysteine + H(+). Its function is as follows. Specifically methylates the guanine in position 2445 (m2G2445) and the guanine in position 2069 (m7G2069) of 23S rRNA. The sequence is that of Ribosomal RNA large subunit methyltransferase K/L from Haemophilus influenzae (strain 86-028NP).